The sequence spans 155 residues: Large ribosomal subunit protein uL30 (155 aa).

It belongs to the universal ribosomal protein uL30 family. Part of the 50S ribosomal subunit.

The polypeptide is Large ribosomal subunit protein uL30 (Nitrosopumilus maritimus (strain SCM1)).